A 224-amino-acid polypeptide reads, in one-letter code: Endonuclease NucS (224 aa).

Belongs to the NucS endonuclease family.

The protein resides in the cytoplasm. Its function is as follows. Cleaves both 3' and 5' ssDNA extremities of branched DNA structures. In Rhodococcus erythropolis (strain PR4 / NBRC 100887), this protein is Endonuclease NucS.